We begin with the raw amino-acid sequence, 662 residues long: UvrABC system protein B (662 aa).

Positions 25 to 412 (EGIEKGLKMQ…SQKIVEQIIR (388 aa)) constitute a Helicase ATP-binding domain. 38 to 45 (GVTGSGKT) lines the ATP pocket. The short motif at 91–114 (YYDYYQPEAYLPATDTYIEKDSAI) is the Beta-hairpin element. The Helicase C-terminal domain occupies 429–595 (QVDDLYGEIK…TVQKAVRDVI (167 aa)). In terms of domain architecture, UVR spans 622–657 (KQYVEKLTREMKEAAKALEFEKAAMLRDLIIELRAQ).

It belongs to the UvrB family. As to quaternary structure, forms a heterotetramer with UvrA during the search for lesions. Interacts with UvrC in an incision complex.

It localises to the cytoplasm. In terms of biological role, the UvrABC repair system catalyzes the recognition and processing of DNA lesions. A damage recognition complex composed of 2 UvrA and 2 UvrB subunits scans DNA for abnormalities. Upon binding of the UvrA(2)B(2) complex to a putative damaged site, the DNA wraps around one UvrB monomer. DNA wrap is dependent on ATP binding by UvrB and probably causes local melting of the DNA helix, facilitating insertion of UvrB beta-hairpin between the DNA strands. Then UvrB probes one DNA strand for the presence of a lesion. If a lesion is found the UvrA subunits dissociate and the UvrB-DNA preincision complex is formed. This complex is subsequently bound by UvrC and the second UvrB is released. If no lesion is found, the DNA wraps around the other UvrB subunit that will check the other stand for damage. The chain is UvrABC system protein B from Carboxydothermus hydrogenoformans (strain ATCC BAA-161 / DSM 6008 / Z-2901).